Here is a 578-residue protein sequence, read N- to C-terminus: Tetratricopeptide repeat protein ttc-39B (578 aa).

TPR repeat units lie at residues 297–330 (AIML…QDVY), 481–514 (CLYY…ESSI), and 522–554 (PNAT…YKSY).

This is Tetratricopeptide repeat protein ttc-39B from Caenorhabditis elegans.